A 141-amino-acid chain; its full sequence is Hemoglobin subunit alpha (141 aa).

In terms of domain architecture, Globin spans 1-141; that stretch reads VLSPADKTNV…VSTVLTSKYR (141 aa). Ser-3 is modified (phosphoserine). At Lys-7 the chain carries N6-succinyllysine. Thr-8 is modified (phosphothreonine). An N6-succinyllysine modification is found at Lys-11. N6-acetyllysine; alternate is present on Lys-16. N6-succinyllysine; alternate is present on Lys-16. Tyr-24 carries the phosphotyrosine modification. Phosphoserine is present on Ser-35. An N6-succinyllysine modification is found at Lys-40. Ser-49 carries the phosphoserine modification. Position 58 (His-58) interacts with O2. Residue His-87 coordinates heme b. A Phosphoserine modification is found at Ser-102. Thr-108 is modified (phosphothreonine). Ser-124 carries the phosphoserine modification. Thr-134 and Thr-137 each carry phosphothreonine. The residue at position 138 (Ser-138) is a Phosphoserine.

The protein belongs to the globin family. As to quaternary structure, heterotetramer of two alpha chains and two beta chains. As to expression, red blood cells.

Involved in oxygen transport from the lung to the various peripheral tissues. Its function is as follows. Hemopressin acts as an antagonist peptide of the cannabinoid receptor CNR1. Hemopressin-binding efficiently blocks cannabinoid receptor CNR1 and subsequent signaling. This is Hemoglobin subunit alpha (HBA) from Pteronura brasiliensis (Giant otter).